Here is a 230-residue protein sequence, read N- to C-terminus: Flagellar L-ring protein (230 aa).

A signal peptide spans 1-22 (MSPLSNFARTALACAVAALLGG). Cys23 carries the N-palmitoyl cysteine lipid modification. The S-diacylglycerol cysteine moiety is linked to residue Cys23.

It belongs to the FlgH family. As to quaternary structure, the basal body constitutes a major portion of the flagellar organelle and consists of four rings (L,P,S, and M) mounted on a central rod.

It is found in the cell outer membrane. The protein localises to the bacterial flagellum basal body. Functionally, assembles around the rod to form the L-ring and probably protects the motor/basal body from shearing forces during rotation. This is Flagellar L-ring protein from Stenotrophomonas maltophilia (strain R551-3).